We begin with the raw amino-acid sequence, 1074 residues long: Pleckstrin homology domain-containing family M member 1 (1074 aa).

The RUN domain occupies 40–182; it reads TSEDGDANTM…LSFELSYKSA (143 aa). Disordered stretches follow at residues 214-244, 272-336, and 382-454; these read QRKESLDSISHSSGSEDIEVQHSGHKIRRNR, LQEN…MFQT, and DEKQ…PPQE. Ser218 is subject to Phosphoserine. Composition is skewed to polar residues over residues 313-329 and 393-404; these read SKAQVNSAPSSGPNQEP and PAQSTSDQQPSS. Residues Ser433, Ser436, and Ser491 each carry the phosphoserine modification. Positions 506 to 526 are disordered; the sequence is GNAQPAPAPAPAPAPAPAPAP. The span at 511 to 525 shows a compositional bias: pro residues; the sequence is APAPAPAPAPAPAPA. The PH 1 domain occupies 551-642; the sequence is GLMKLGTVAR…WLDRVREALQ (92 aa). The LIR signature appears at 649 to 655; that stretch reads EDEWVNI. Residues 661–680 are disordered; that stretch reads AEDAPEAPPDSLPPYSTLLP. An interaction with RAB7A region spans residues 672 to 1074; it reads LPPYSTLLPE…RKYQEQNVVS (403 aa). The PH 2 domain maps to 701-795; sequence DAIKESLLYL…WRDLVRKVLA (95 aa). The Phorbol-ester/DAG-type zinc finger occupies 1004-1058; the sequence is QHVYHCDLCTQRGFICQICHHQDIIFPFEFDTTVRCAECRTVFHQSCQAVVRKGC.

In terms of assembly, interacts (via N- and C-terminus) with RAB7A (GTP-bound form). Simultaneously interacts with RAB7A and ARL8B; bringing about clustering and fusion of late endosomes and lysosomes. Interacts (via RUN domain) with ARL8B (GTP-bound form); the interaction is required for PLEKHM1 localization to lysosomes and for ARL8B function in delivery and degradation of endocytic and autophagic cargo in lysosomes. PLEKHM1 and PLEKHM2 compete for interaction with ARL8B. Interacts with ARL8A; the interaction is weaker than with ARL8B. Interacts with VPS41, VPS11, VPS18, VPS33A and VPS39; indicative for an association with the HOPS complex; the interactions with, at least, VPS41, VPS11, VPS18 and VPS33A require ARL8B. Interacts with GABARAP, GABARAPL, GABARAPL2, MAP1LC3A, MAP1LC3B and MAP1LC3C. Interacts with PAFAH1B. Interacts (via N- and C-terminus) with NDEL1. Interacts (via C-terminus) with MAP3K7. Interacts (via N- and C-terminus) with FAM98A. Interacts (via C-terminus) with DEF8; this interaction is weak but increased in a RAB7A-dependent manner. May interact with sialyl-lex-positive protein.

The protein resides in the autolysosome membrane. Its subcellular location is the endosome membrane. It localises to the late endosome membrane. The protein localises to the lysosome membrane. Its function is as follows. Acts as a multivalent adapter protein that regulates Rab7-dependent and HOPS complex-dependent fusion events in the endolysosomal system and couples autophagic and the endocytic trafficking pathways. Acts as a dual effector of RAB7A and ARL8B that simultaneously binds these GTPases, bringing about clustering and fusion of late endosomes and lysosomes. Required for late stages of endolysosomal maturation, facilitating both endocytosis-mediated degradation of growth factor receptors and autophagosome clearance. Interaction with Arl8b is a crucial factor in the terminal maturation of autophagosomes and to mediate autophagosome-lysosome fusion. Positively regulates lysosome peripheral distribution and ruffled border formation in osteoclasts. May be involved in negative regulation of endocytic transport from early endosome to late endosome/lysosome implicating its association with Rab7. May have a role in sialyl-lex-mediated transduction of apoptotic signals. Involved in bone resorption. The polypeptide is Pleckstrin homology domain-containing family M member 1 (Mus musculus (Mouse)).